The chain runs to 352 residues: Protein MGF 360-16R (352 aa).

It belongs to the asfivirus MGF 360 family.

Functionally, plays a role in virus cell tropism, and may be required for efficient virus replication in macrophages. The chain is Protein MGF 360-16R from Ornithodoros (relapsing fever ticks).